The primary structure comprises 275 residues: MALIKQKPTSAGARFVTRVRSEELYKGEPYAKLLEKQTRSSGRNNQGRVTTRHKGGGHKQFYRIVDFKRDKIDIPARVERIEYDPNRTAYIALVLYRDGERRYIVAPAGLSAGSEIVAGEFAAIKVGNSLPLRNIPVGTVVHCVEGKPGKGAQYARSAGTSIQLVAKEGEYATLRMRSGEMRKVLADCKATIGEVSNNEHNLVSLGKAGASRWRGVRPTVRGVAMNPVDHPHGGGEGRTSGGRHPVSPWGIPTKGYKTRNNKRTDGLIIRRRKTR.

2 disordered regions span residues 35 to 55 (EKQT…RHKG) and 223 to 260 (VAMN…KTRN). Residues 39–49 (RSSGRNNQGRV) are compositionally biased toward polar residues.

This sequence belongs to the universal ribosomal protein uL2 family. Part of the 50S ribosomal subunit. Forms a bridge to the 30S subunit in the 70S ribosome.

One of the primary rRNA binding proteins. Required for association of the 30S and 50S subunits to form the 70S ribosome, for tRNA binding and peptide bond formation. It has been suggested to have peptidyltransferase activity; this is somewhat controversial. Makes several contacts with the 16S rRNA in the 70S ribosome. The chain is Large ribosomal subunit protein uL2 from Methylococcus capsulatus (strain ATCC 33009 / NCIMB 11132 / Bath).